The following is a 224-amino-acid chain: MTIHSPVVTVDGPSGAGKGTLCMLLAEKLGYNLLDSGAIYRVLALAAIHHGVDLGSEEGLVPLAANLDVQFKAEGDLVKVILEGEDVSSELRKEETGMAASKVAALPQVREALLRRQRAFASAPGLVADGRDMGTVVFTGAEVKIFLDASAEERANRRMKQLQQKGLNVRFDRLLSEIQERDDRDRNRAVAPLRPAEDALVLDSTSMNIDEVVAQALTFIESKL.

An ATP-binding site is contributed by 12–20 (GPSGAGKGT).

This sequence belongs to the cytidylate kinase family. Type 1 subfamily.

The protein localises to the cytoplasm. The catalysed reaction is CMP + ATP = CDP + ADP. It catalyses the reaction dCMP + ATP = dCDP + ADP. The sequence is that of Cytidylate kinase from Aliivibrio salmonicida (strain LFI1238) (Vibrio salmonicida (strain LFI1238)).